We begin with the raw amino-acid sequence, 193 residues long: Ion-translocating oxidoreductase complex subunit B (193 aa).

The tract at residues 1 to 26 is hydrophobic; sequence MSTMLIAVILLTLLALFFGVLLGFAA. Residues 32-90 form the 4Fe-4S domain; it reads EGNPIVDELEAILPQTQCGQCGYPGCRPYAEAIANGDKVNKCPPGGTATMEKLASLMGV. [4Fe-4S] cluster contacts are provided by Cys-49, Cys-52, Cys-57, Cys-73, Cys-114, Cys-117, Cys-120, Cys-124, Cys-144, Cys-147, Cys-150, and Cys-154. 2 4Fe-4S ferredoxin-type domains span residues 105 to 134 and 136 to 164; these read KVAYIREDECIGCTKCIQACPVDAIIGAGK and MHTVLTADCTGCDLCVEPCPVDCIDMVPV.

Belongs to the 4Fe4S bacterial-type ferredoxin family. RnfB subfamily. As to quaternary structure, the complex is composed of six subunits: RnfA, RnfB, RnfC, RnfD, RnfE and RnfG. Requires [4Fe-4S] cluster as cofactor.

The protein localises to the cell inner membrane. Its function is as follows. Part of a membrane-bound complex that couples electron transfer with translocation of ions across the membrane. In Shewanella oneidensis (strain ATCC 700550 / JCM 31522 / CIP 106686 / LMG 19005 / NCIMB 14063 / MR-1), this protein is Ion-translocating oxidoreductase complex subunit B.